Here is a 258-residue protein sequence, read N- to C-terminus: Methylthioribulose-1-phosphate dehydratase (258 aa).

Positions 1–20 are enriched in polar residues; the sequence is MTPPSNGQAAETNDHLVQSD. Positions 1–21 are disordered; sequence MTPPSNGQAAETNDHLVQSDN. C105 is a substrate binding site. Zn(2+) contacts are provided by H123 and H125. E153 functions as the Proton donor/acceptor in the catalytic mechanism. H210 is a Zn(2+) binding site.

This sequence belongs to the aldolase class II family. MtnB subfamily. The cofactor is Zn(2+).

It localises to the cytoplasm. It carries out the reaction 5-(methylsulfanyl)-D-ribulose 1-phosphate = 5-methylsulfanyl-2,3-dioxopentyl phosphate + H2O. It functions in the pathway amino-acid biosynthesis; L-methionine biosynthesis via salvage pathway; L-methionine from S-methyl-5-thio-alpha-D-ribose 1-phosphate: step 2/6. Functionally, catalyzes the dehydration of methylthioribulose-1-phosphate (MTRu-1-P) into 2,3-diketo-5-methylthiopentyl-1-phosphate (DK-MTP-1-P). This is Methylthioribulose-1-phosphate dehydratase from Chaetomium globosum (strain ATCC 6205 / CBS 148.51 / DSM 1962 / NBRC 6347 / NRRL 1970) (Soil fungus).